The chain runs to 458 residues: tRNA modification GTPase MnmE (458 aa).

Residues arginine 28, glutamate 85, and lysine 124 each coordinate (6S)-5-formyl-5,6,7,8-tetrahydrofolate. Positions 220 to 381 (GMNVVIAGRP…LKEHLKAVMG (162 aa)) constitute a TrmE-type G domain. Asparagine 230 is a binding site for K(+). Residues 230–235 (NAGKSS), 249–255 (TDIEGTT), and 274–277 (DTAG) contribute to the GTP site. Mg(2+) is bound at residue serine 234. 3 residues coordinate K(+): threonine 249, isoleucine 251, and threonine 254. A Mg(2+)-binding site is contributed by threonine 255. A (6S)-5-formyl-5,6,7,8-tetrahydrofolate-binding site is contributed by lysine 458.

It belongs to the TRAFAC class TrmE-Era-EngA-EngB-Septin-like GTPase superfamily. TrmE GTPase family. Homodimer. Heterotetramer of two MnmE and two MnmG subunits. It depends on K(+) as a cofactor.

It localises to the cytoplasm. Functionally, exhibits a very high intrinsic GTPase hydrolysis rate. Involved in the addition of a carboxymethylaminomethyl (cmnm) group at the wobble position (U34) of certain tRNAs, forming tRNA-cmnm(5)s(2)U34. The sequence is that of tRNA modification GTPase MnmE from Chromohalobacter salexigens (strain ATCC BAA-138 / DSM 3043 / CIP 106854 / NCIMB 13768 / 1H11).